The following is a 340-amino-acid chain: Ketol-acid reductoisomerase (NADP(+)) (340 aa).

The KARI N-terminal Rossmann domain occupies 3–182; sequence VQMEYEKDVK…GAARVGLLET (180 aa). NADP(+) is bound by residues 26–29, R49, S53, and 83–86; these read YGSQ and DEIQ. H108 is an active-site residue. G134 lines the NADP(+) pocket. The KARI C-terminal knotted domain occupies 183 to 328; the sequence is TYKEETEEDL…AELRKAMPFV (146 aa). Positions 191, 195, 227, and 231 each coordinate Mg(2+). S252 contributes to the substrate binding site.

This sequence belongs to the ketol-acid reductoisomerase family. It depends on Mg(2+) as a cofactor.

It carries out the reaction (2R)-2,3-dihydroxy-3-methylbutanoate + NADP(+) = (2S)-2-acetolactate + NADPH + H(+). The enzyme catalyses (2R,3R)-2,3-dihydroxy-3-methylpentanoate + NADP(+) = (S)-2-ethyl-2-hydroxy-3-oxobutanoate + NADPH + H(+). It functions in the pathway amino-acid biosynthesis; L-isoleucine biosynthesis; L-isoleucine from 2-oxobutanoate: step 2/4. It participates in amino-acid biosynthesis; L-valine biosynthesis; L-valine from pyruvate: step 2/4. Its function is as follows. Involved in the biosynthesis of branched-chain amino acids (BCAA). Catalyzes an alkyl-migration followed by a ketol-acid reduction of (S)-2-acetolactate (S2AL) to yield (R)-2,3-dihydroxy-isovalerate. In the isomerase reaction, S2AL is rearranged via a Mg-dependent methyl migration to produce 3-hydroxy-3-methyl-2-ketobutyrate (HMKB). In the reductase reaction, this 2-ketoacid undergoes a metal-dependent reduction by NADPH to yield (R)-2,3-dihydroxy-isovalerate. The sequence is that of Ketol-acid reductoisomerase (NADP(+)) from Streptococcus gordonii (strain Challis / ATCC 35105 / BCRC 15272 / CH1 / DL1 / V288).